A 75-amino-acid polypeptide reads, in one-letter code: MARIDYATAPLFVIVGLAVVLTGATGYKRLSSDQDISLTRKGQMLWKDNPTHKFVDRNTTMGYFKTIETGKYLKE.

A helical transmembrane segment spans residues 7-26; it reads ATAPLFVIVGLAVVLTGATG.

The protein localises to the membrane. This is an uncharacterized protein from Dictyostelium discoideum (Social amoeba).